Here is a 599-residue protein sequence, read N- to C-terminus: Elongation factor 4 (599 aa).

The tr-type G domain occupies 5-187 (SHIRNFSIIA…RLVTAIPAPE (183 aa)). Residues 17–22 (DHGKST) and 134–137 (NKMD) contribute to the GTP site.

The protein belongs to the TRAFAC class translation factor GTPase superfamily. Classic translation factor GTPase family. LepA subfamily.

Its subcellular location is the cell inner membrane. It catalyses the reaction GTP + H2O = GDP + phosphate + H(+). Its function is as follows. Required for accurate and efficient protein synthesis under certain stress conditions. May act as a fidelity factor of the translation reaction, by catalyzing a one-codon backward translocation of tRNAs on improperly translocated ribosomes. Back-translocation proceeds from a post-translocation (POST) complex to a pre-translocation (PRE) complex, thus giving elongation factor G a second chance to translocate the tRNAs correctly. Binds to ribosomes in a GTP-dependent manner. This is Elongation factor 4 from Pseudomonas aeruginosa (strain LESB58).